Here is a 63-residue protein sequence, read N- to C-terminus: Cysteine-rich peptide clone 2 (63 aa).

The first 23 residues, 1 to 23 (MHFSGVVLILLSMTLVNFVFVET), serve as a signal peptide directing secretion. 3 disulfides stabilise this stretch: C33-C53, C38-C58, and C42-C60.

Expressed by the venom gland.

It localises to the secreted. This is Cysteine-rich peptide clone 2 from Tityus costatus (Brazilian scorpion).